Consider the following 348-residue polypeptide: D-erythrose-4-phosphate dehydrogenase (348 aa).

Residues 12-13 (RI) and R81 each bind NAD(+). Substrate is bound by residues 154–156 (SCT), R200, 213–214 (TK), and R236. The active-site Nucleophile is the C155. N318 is a binding site for NAD(+).

It belongs to the glyceraldehyde-3-phosphate dehydrogenase family. Epd subfamily. As to quaternary structure, homotetramer.

Its subcellular location is the cytoplasm. It catalyses the reaction D-erythrose 4-phosphate + NAD(+) + H2O = 4-phospho-D-erythronate + NADH + 2 H(+). It functions in the pathway cofactor biosynthesis; pyridoxine 5'-phosphate biosynthesis; pyridoxine 5'-phosphate from D-erythrose 4-phosphate: step 1/5. Its function is as follows. Catalyzes the NAD-dependent conversion of D-erythrose 4-phosphate to 4-phosphoerythronate. The protein is D-erythrose-4-phosphate dehydrogenase of Salmonella schwarzengrund (strain CVM19633).